Reading from the N-terminus, the 106-residue chain is UPF0145 protein FTL_1249 (106 aa).

It belongs to the UPF0145 family.

The sequence is that of UPF0145 protein FTL_1249 from Francisella tularensis subsp. holarctica (strain LVS).